Consider the following 856-residue polypeptide: DNA gyrase subunit A (856 aa).

Positions Leu-45–Leu-517 constitute a Topo IIA-type catalytic domain. Tyr-133 serves as the catalytic O-(5'-phospho-DNA)-tyrosine intermediate. The short motif at Gln-544–Gly-550 is the GyrA-box element. Residues Thr-822–Ser-856 are disordered. Residues Ser-835 to Ser-847 are compositionally biased toward acidic residues.

It belongs to the type II topoisomerase GyrA/ParC subunit family. As to quaternary structure, heterotetramer, composed of two GyrA and two GyrB chains. In the heterotetramer, GyrA contains the active site tyrosine that forms a transient covalent intermediate with DNA, while GyrB binds cofactors and catalyzes ATP hydrolysis.

It is found in the cytoplasm. The catalysed reaction is ATP-dependent breakage, passage and rejoining of double-stranded DNA.. Functionally, a type II topoisomerase that negatively supercoils closed circular double-stranded (ds) DNA in an ATP-dependent manner to modulate DNA topology and maintain chromosomes in an underwound state. Negative supercoiling favors strand separation, and DNA replication, transcription, recombination and repair, all of which involve strand separation. Also able to catalyze the interconversion of other topological isomers of dsDNA rings, including catenanes and knotted rings. Type II topoisomerases break and join 2 DNA strands simultaneously in an ATP-dependent manner. This chain is DNA gyrase subunit A, found in Haloquadratum walsbyi (strain DSM 16790 / HBSQ001).